The primary structure comprises 360 residues: Phospho-N-acetylmuramoyl-pentapeptide-transferase (360 aa).

10 consecutive transmembrane segments (helical) span residues 27–47, 71–91, 94–114, 132–152, 168–188, 199–219, 236–256, 263–283, 288–308, and 338–358; these read IVSLLTALAIALWMGPRMIAF, TPTMGGLLILLSITISTLLWV, NNPYVWCVLIVLIGYGIVGFV, WKYFWQSVLALGVAFAMYSFG, VMPQLGVLYILLTYFVIVGTS, GLAIMPTVFVAAGFALVAWAT, AGELVIVCTAIVGAGLGFLWF, VFMGDVGSLALGGALGTIAVL, FLLVIMGGVFVVETLSVILQV, and VIVRFWIISLMLVLIGLATLK.

This sequence belongs to the glycosyltransferase 4 family. MraY subfamily. Mg(2+) serves as cofactor.

The protein resides in the cell inner membrane. It carries out the reaction UDP-N-acetyl-alpha-D-muramoyl-L-alanyl-gamma-D-glutamyl-meso-2,6-diaminopimeloyl-D-alanyl-D-alanine + di-trans,octa-cis-undecaprenyl phosphate = di-trans,octa-cis-undecaprenyl diphospho-N-acetyl-alpha-D-muramoyl-L-alanyl-D-glutamyl-meso-2,6-diaminopimeloyl-D-alanyl-D-alanine + UMP. It functions in the pathway cell wall biogenesis; peptidoglycan biosynthesis. Catalyzes the initial step of the lipid cycle reactions in the biosynthesis of the cell wall peptidoglycan: transfers peptidoglycan precursor phospho-MurNAc-pentapeptide from UDP-MurNAc-pentapeptide onto the lipid carrier undecaprenyl phosphate, yielding undecaprenyl-pyrophosphoryl-MurNAc-pentapeptide, known as lipid I. This is Phospho-N-acetylmuramoyl-pentapeptide-transferase from Photorhabdus laumondii subsp. laumondii (strain DSM 15139 / CIP 105565 / TT01) (Photorhabdus luminescens subsp. laumondii).